The following is a 512-amino-acid chain: Bifunctional purine biosynthesis protein PurH (512 aa).

The MGS-like domain maps to 1-144; it reads MKRALVSVSD…KNYRDVVVVV (144 aa).

This sequence belongs to the PurH family.

The enzyme catalyses (6R)-10-formyltetrahydrofolate + 5-amino-1-(5-phospho-beta-D-ribosyl)imidazole-4-carboxamide = 5-formamido-1-(5-phospho-D-ribosyl)imidazole-4-carboxamide + (6S)-5,6,7,8-tetrahydrofolate. It catalyses the reaction IMP + H2O = 5-formamido-1-(5-phospho-D-ribosyl)imidazole-4-carboxamide. It functions in the pathway purine metabolism; IMP biosynthesis via de novo pathway; 5-formamido-1-(5-phospho-D-ribosyl)imidazole-4-carboxamide from 5-amino-1-(5-phospho-D-ribosyl)imidazole-4-carboxamide (10-formyl THF route): step 1/1. Its pathway is purine metabolism; IMP biosynthesis via de novo pathway; IMP from 5-formamido-1-(5-phospho-D-ribosyl)imidazole-4-carboxamide: step 1/1. This chain is Bifunctional purine biosynthesis protein PurH, found in Ligilactobacillus salivarius (strain UCC118) (Lactobacillus salivarius).